Here is a 459-residue protein sequence, read N- to C-terminus: Glutamate--tRNA ligase 2 (459 aa).

The 'HIGH' region motif lies at 8–18 (PSPTGYLHIGG). The short motif at 237 to 241 (KLSKR) is the 'KMSKS' region element. Residue Lys-240 coordinates ATP.

The protein belongs to the class-I aminoacyl-tRNA synthetase family. Glutamate--tRNA ligase type 1 subfamily. In terms of assembly, monomer.

The protein localises to the cytoplasm. It carries out the reaction tRNA(Glu) + L-glutamate + ATP = L-glutamyl-tRNA(Glu) + AMP + diphosphate. Catalyzes the attachment of glutamate to tRNA(Glu) in a two-step reaction: glutamate is first activated by ATP to form Glu-AMP and then transferred to the acceptor end of tRNA(Glu). The polypeptide is Glutamate--tRNA ligase 2 (Campylobacter concisus (strain 13826)).